We begin with the raw amino-acid sequence, 406 residues long: Argininosuccinate synthase (406 aa).

ATP is bound by residues 10–18 and A37; that span reads AYSGGLDTS. L-citrulline is bound by residues Y88 and S93. G118 lines the ATP pocket. 3 residues coordinate L-aspartate: T120, N124, and D125. An L-citrulline-binding site is contributed by N124. Positions 128, 179, 188, 264, and 276 each coordinate L-citrulline.

This sequence belongs to the argininosuccinate synthase family. Type 1 subfamily. In terms of assembly, homotetramer.

Its subcellular location is the cytoplasm. The enzyme catalyses L-citrulline + L-aspartate + ATP = 2-(N(omega)-L-arginino)succinate + AMP + diphosphate + H(+). Its pathway is amino-acid biosynthesis; L-arginine biosynthesis; L-arginine from L-ornithine and carbamoyl phosphate: step 2/3. This is Argininosuccinate synthase from Dinoroseobacter shibae (strain DSM 16493 / NCIMB 14021 / DFL 12).